Reading from the N-terminus, the 381-residue chain is 4-hydroxy-3-methylbut-2-en-1-yl diphosphate synthase (flavodoxin) (381 aa).

[4Fe-4S] cluster is bound by residues Cys280, Cys283, Cys315, and Glu322.

This sequence belongs to the IspG family. The cofactor is [4Fe-4S] cluster.

The catalysed reaction is (2E)-4-hydroxy-3-methylbut-2-enyl diphosphate + oxidized [flavodoxin] + H2O + 2 H(+) = 2-C-methyl-D-erythritol 2,4-cyclic diphosphate + reduced [flavodoxin]. The protein operates within isoprenoid biosynthesis; isopentenyl diphosphate biosynthesis via DXP pathway; isopentenyl diphosphate from 1-deoxy-D-xylulose 5-phosphate: step 5/6. Its function is as follows. Converts 2C-methyl-D-erythritol 2,4-cyclodiphosphate (ME-2,4cPP) into 1-hydroxy-2-methyl-2-(E)-butenyl 4-diphosphate. The protein is 4-hydroxy-3-methylbut-2-en-1-yl diphosphate synthase (flavodoxin) of Clavibacter michiganensis subsp. michiganensis (strain NCPPB 382).